The chain runs to 248 residues: 1-(5-phosphoribosyl)-5-[(5-phosphoribosylamino)methylideneamino] imidazole-4-carboxamide isomerase (248 aa).

Asp-11 (proton acceptor) is an active-site residue. Asp-132 functions as the Proton donor in the catalytic mechanism.

Belongs to the HisA/HisF family.

Its subcellular location is the cytoplasm. The enzyme catalyses 1-(5-phospho-beta-D-ribosyl)-5-[(5-phospho-beta-D-ribosylamino)methylideneamino]imidazole-4-carboxamide = 5-[(5-phospho-1-deoxy-D-ribulos-1-ylimino)methylamino]-1-(5-phospho-beta-D-ribosyl)imidazole-4-carboxamide. The protein operates within amino-acid biosynthesis; L-histidine biosynthesis; L-histidine from 5-phospho-alpha-D-ribose 1-diphosphate: step 4/9. The protein is 1-(5-phosphoribosyl)-5-[(5-phosphoribosylamino)methylideneamino] imidazole-4-carboxamide isomerase of Bradyrhizobium diazoefficiens (strain JCM 10833 / BCRC 13528 / IAM 13628 / NBRC 14792 / USDA 110).